Reading from the N-terminus, the 413-residue chain is Divalent metal cation transporter MntH (413 aa).

11 consecutive transmembrane segments (helical) span residues 19–39 (LALM…GNFA), 46–66 (ASFG…AMLI), 94–114 (VWFY…AEFI), 122–142 (LVLG…TFLI), 156–176 (VIGG…IFSQ), 196–216 (AVFL…IYLH), 241–261 (IAMT…AAAF), 290–310 (IFGL…TLAG), 329–349 (AITM…TRIL), 350–370 (VMSQ…LLIF), and 389–409 (IGWA…VGSL).

It belongs to the NRAMP family.

It is found in the cell inner membrane. In terms of biological role, h(+)-stimulated, divalent metal cation uptake system. This Klebsiella pneumoniae subsp. pneumoniae (strain ATCC 700721 / MGH 78578) protein is Divalent metal cation transporter MntH.